The chain runs to 193 residues: UPF0301 protein SAV_5129 (193 aa).

Belongs to the UPF0301 (AlgH) family.

The protein is UPF0301 protein SAV_5129 of Streptomyces avermitilis (strain ATCC 31267 / DSM 46492 / JCM 5070 / NBRC 14893 / NCIMB 12804 / NRRL 8165 / MA-4680).